Consider the following 37-residue polypeptide: Photosystem II reaction center protein M (37 aa).

Residues 7-27 (GFIAVLMFLAIPTAFLLIPYV) form a helical membrane-spanning segment.

It belongs to the PsbM family. In terms of assembly, PSII is composed of 1 copy each of membrane proteins PsbA, PsbB, PsbC, PsbD, PsbE, PsbF, PsbH, PsbI, PsbJ, PsbK, PsbL, PsbM, PsbT, PsbX, PsbY, PsbZ, Psb30/Ycf12, at least 3 peripheral proteins of the oxygen-evolving complex and a large number of cofactors. It forms dimeric complexes.

It localises to the plastid. The protein localises to the chloroplast thylakoid membrane. Its function is as follows. One of the components of the core complex of photosystem II (PSII). PSII is a light-driven water:plastoquinone oxidoreductase that uses light energy to abstract electrons from H(2)O, generating O(2) and a proton gradient subsequently used for ATP formation. It consists of a core antenna complex that captures photons, and an electron transfer chain that converts photonic excitation into a charge separation. This subunit is found at the monomer-monomer interface. The sequence is that of Photosystem II reaction center protein M from Pinus koraiensis (Korean pine).